The sequence spans 453 residues: Bifunctional protein GlmU (453 aa).

Positions 1–226 (MLDILILAAG…IQEVEGINNR (226 aa)) are pyrophosphorylase. Residues 7–10 (LAAG), Lys21, Gln72, 77–78 (GT), 99–101 (YGD), Gly136, Glu151, Asn166, and Asn224 contribute to the UDP-N-acetyl-alpha-D-glucosamine site. Asp101 is a binding site for Mg(2+). Mg(2+) is bound at residue Asn224. Positions 227 to 247 (QQQATLERYYQQQQARALMDA) are linker. Residues 248-453 (GVTLLDPARF…QGWERPTRKS (206 aa)) are N-acetyltransferase. UDP-N-acetyl-alpha-D-glucosamine contacts are provided by Arg330 and Lys348. The active-site Proton acceptor is His360. Tyr363 and Asn374 together coordinate UDP-N-acetyl-alpha-D-glucosamine. Acetyl-CoA contacts are provided by residues Ala377, 383–384 (NY), Ser402, Ala420, and Arg437.

It in the N-terminal section; belongs to the N-acetylglucosamine-1-phosphate uridyltransferase family. The protein in the C-terminal section; belongs to the transferase hexapeptide repeat family. Homotrimer. Requires Mg(2+) as cofactor.

It is found in the cytoplasm. The catalysed reaction is alpha-D-glucosamine 1-phosphate + acetyl-CoA = N-acetyl-alpha-D-glucosamine 1-phosphate + CoA + H(+). It carries out the reaction N-acetyl-alpha-D-glucosamine 1-phosphate + UTP + H(+) = UDP-N-acetyl-alpha-D-glucosamine + diphosphate. It functions in the pathway nucleotide-sugar biosynthesis; UDP-N-acetyl-alpha-D-glucosamine biosynthesis; N-acetyl-alpha-D-glucosamine 1-phosphate from alpha-D-glucosamine 6-phosphate (route II): step 2/2. Its pathway is nucleotide-sugar biosynthesis; UDP-N-acetyl-alpha-D-glucosamine biosynthesis; UDP-N-acetyl-alpha-D-glucosamine from N-acetyl-alpha-D-glucosamine 1-phosphate: step 1/1. It participates in bacterial outer membrane biogenesis; LPS lipid A biosynthesis. Its function is as follows. Catalyzes the last two sequential reactions in the de novo biosynthetic pathway for UDP-N-acetylglucosamine (UDP-GlcNAc). The C-terminal domain catalyzes the transfer of acetyl group from acetyl coenzyme A to glucosamine-1-phosphate (GlcN-1-P) to produce N-acetylglucosamine-1-phosphate (GlcNAc-1-P), which is converted into UDP-GlcNAc by the transfer of uridine 5-monophosphate (from uridine 5-triphosphate), a reaction catalyzed by the N-terminal domain. The sequence is that of Bifunctional protein GlmU from Cellvibrio japonicus (strain Ueda107) (Pseudomonas fluorescens subsp. cellulosa).